The chain runs to 306 residues: Ribonuclease Z (306 aa).

Residues H63, H65, D67, H68, H141, D211, and H269 each contribute to the Zn(2+) site. D67 acts as the Proton acceptor in catalysis.

The protein belongs to the RNase Z family. As to quaternary structure, homodimer. Zn(2+) serves as cofactor.

The enzyme catalyses Endonucleolytic cleavage of RNA, removing extra 3' nucleotides from tRNA precursor, generating 3' termini of tRNAs. A 3'-hydroxy group is left at the tRNA terminus and a 5'-phosphoryl group is left at the trailer molecule.. Functionally, zinc phosphodiesterase, which displays some tRNA 3'-processing endonuclease activity. Probably involved in tRNA maturation, by removing a 3'-trailer from precursor tRNA. In Staphylococcus saprophyticus subsp. saprophyticus (strain ATCC 15305 / DSM 20229 / NCIMB 8711 / NCTC 7292 / S-41), this protein is Ribonuclease Z.